Consider the following 498-residue polypeptide: Diacylglycerol O-acyltransferase 1 (498 aa).

Positions 1 to 66 (MGDRGGAGSS…AHTRDKDRQT (66 aa)) are disordered. At 1 to 92 (MGDRGGAGSS…SLFSSDSGFS (92 aa)) the chain is on the cytoplasmic side. Residues 1–96 (MGDRGGAGSS…SDSGFSNYRG (96 aa)) form an involved in homomerization region. Ser20 bears the Phosphoserine mark. The span at 58–68 (HTRDKDRQTSV) shows a compositional bias: basic and acidic residues. A helical transmembrane segment spans residues 93-127 (NYRGILNWCVVMLILSNARLSLENLIKYGILVDPI). The Lumenal portion of the chain corresponds to 128 to 139 (QVVSLFLKDPYS). The tract at residues 128 to 139 (QVVSLFLKDPYS) is extracellular loop 1 (EL1). The helical transmembrane segment at 140–165 (WPAPCLIIASNIFIVATFQIEKRLSV) threads the bilayer. The tract at residues 140-498 (WPAPCLIIAS…VLNYDAPVGA (359 aa)) is MBOAT fold. Residues 166 to 170 (GALTE) are Cytoplasmic-facing. A helical membrane pass occupies residues 171–193 (QMGLLLHVVNLATIICFPAAVAL). Topologically, residues 194 to 200 (LVESITP) are lumenal. A helical transmembrane segment spans residues 201–232 (VGSLFALASYSIIFLKLSSYRDVNLWCRQRRV). The Cytoplasmic segment spans residues 233–284 (KAKAVSAGKKVSGAAAQNTVSYPDNLTYRDLYYFIFAPTLCYELNFPRSPRI). The segment at 235–287 (KAVSAGKKVSGAAAQNTVSYPDNLTYRDLYYFIFAPTLCYELNFPRSPRIRKR) is intracellular loop 1 (IL1). The helical transmembrane segment at 285–319 (RKRFLLRRVLEMLFFTQLQVGLIQQWMVPTIQNSM) threads the bilayer. Residues 320–326 (KPFKDMD) lie on the Lumenal side of the membrane. The helical transmembrane segment at 327–364 (YSRIIERLLKLAVPNHLIWLIFFYWLFHSCLNAVAELL) threads the bilayer. Topologically, residues 365 to 410 (QFGDREFYRDWWNAESVTYFWQNWNIPVHKWCIRHFYKPMLRLGSN) are cytoplasmic. Positions 365–410 (QFGDREFYRDWWNAESVTYFWQNWNIPVHKWCIRHFYKPMLRLGSN) are intracellular loop 2 (IL2). Residues 371–377 (FYRDWWN) carry the FYXDWWN motif motif. Residues 385–393 (WQNWNIPVH), Tyr401, and Arg415 each bind an acyl-CoA. The segment at 391–405 (PVHKWCIRHFYKPML) is amphipathic helix (AH). Residues 411–431 (KWMARTGVFWASAFFHEYLVS) traverse the membrane as a helical segment. His426 is a catalytic residue. Residues 432 to 439 (IPLRMFRL) are Lumenal-facing. Residues 440–458 (WAFTAMMAQVPLAWIVNRF) form a helical membrane-spanning segment. At 459-460 (FQ) the chain is on the cytoplasmic side. Residues 461–492 (GNYGNAAVWVTLIIGQPVAVLMYVHDYYVLNY) form a helical membrane-spanning segment. Tyr488 is an an acyl-CoA binding site. Over 493-498 (DAPVGA) the chain is Lumenal.

This sequence belongs to the membrane-bound acyltransferase family. Sterol o-acyltransferase subfamily. In terms of assembly, homodimer or homotetramer; both forms have similar enzymatic activities.

Its subcellular location is the endoplasmic reticulum membrane. The enzyme catalyses an acyl-CoA + a 1,2-diacyl-sn-glycerol = a triacyl-sn-glycerol + CoA. It catalyses the reaction all-trans-retinol + an acyl-CoA = an all-trans-retinyl ester + CoA. It carries out the reaction 2-(9Z-octadecenoyl)-glycerol + (9Z)-octadecenoyl-CoA = 1,2-di-(9Z-octadecenoyl)-sn-glycerol + CoA. The catalysed reaction is 1,2-di-(9Z-octadecenoyl)-sn-glycerol + (9Z)-octadecenoyl-CoA = 1,2,3-tri-(9Z-octadecenoyl)-glycerol + CoA. The enzyme catalyses all-trans-retinol + hexadecanoyl-CoA = all-trans-retinyl hexadecanoate + CoA. It catalyses the reaction 1-O-(9Z-octadecenyl)-glycerol + (9Z)-octadecenoyl-CoA = 1-O-(9Z-octadecyl)-3-(9Z-octadecenoyl)-glycerol + CoA. It carries out the reaction 1-O-(9Z-octadecyl)-3-(9Z-octadecenoyl)-glycerol + (9Z)-octadecenoyl-CoA = 1-O-(9Z-octadecenyl)-2,3-di-(9Z-octadecenoyl)glycerol + CoA. The catalysed reaction is 1-(9Z-octadecenoyl)-glycerol + (9Z)-octadecenoyl-CoA = 1,2-di-(9Z-octadecenoyl)-glycerol + CoA. The enzyme catalyses 1,2-di-(9Z-octadecenoyl)-glycerol + (9Z)-octadecenoate + H(+) = 1,2,3-tri-(9Z-octadecenoyl)-glycerol + H2O. It catalyses the reaction 1-octadecanoyl-2-(5Z,8Z,11Z,14Z-eicosatetraenoyl)-sn-glycerol + (9Z)-octadecenoyl-CoA = 1-octadecanoyl-2-(5Z,8Z,11Z,14Z)-eicosatetraenoyl-3-(9Z)-octadecenoyl-sn-glycerol + CoA. It carries out the reaction hexadecane-1,2-diol + 2 hexadecanoyl-CoA = 1,2-O,O-dihexadecanoyl-1,2-hexadecanediol + 2 CoA. The catalysed reaction is hexadecane-1,2-diol + hexadecanoyl-CoA = 2-hydroxyhexadecyl hexadecanoate + CoA. The enzyme catalyses 2-(9Z-octadecenoyl)-glycerol + hexadecanoyl-CoA = 1-hexadecanoyl-2-(9Z-octadecenoyl)-sn-glycerol + CoA. It catalyses the reaction 1,2-di-(9Z-octadecenoyl)-sn-glycerol + hexadecanoyl-CoA = 1,2-di-(9Z)-octadecenoyl-3-hexadecanoyl-sn-glycerol + CoA. It carries out the reaction hexadecan-1-ol + hexadecanoyl-CoA = hexadecanyl hexadecanoate + CoA. The catalysed reaction is 13-cis-retinol + hexadecanoyl-CoA = 13-cis-retinyl hexadecanoate + CoA. The enzyme catalyses 1,3-di-(9Z-octadecenoyl)-glycerol + (9Z)-octadecenoyl-CoA = 1,2,3-tri-(9Z-octadecenoyl)-glycerol + CoA. It catalyses the reaction 2,3-di-(9Z)-octadecenoyl-sn-glycerol + (9Z)-octadecenoyl-CoA = 1,2,3-tri-(9Z-octadecenoyl)-glycerol + CoA. The protein operates within lipid metabolism; glycerolipid metabolism. Its function is as follows. Catalyzes the terminal and only committed step in triacylglycerol synthesis by using diacylglycerol and fatty acyl CoA as substrates. Highly expressed in epithelial cells of the small intestine and its activity is essential for the absorption of dietary fats. In liver, plays a role in esterifying exogenous fatty acids to glycerol, and is required to synthesize fat for storage. Also present in female mammary glands, where it produces fat in the milk. May be involved in VLDL (very low density lipoprotein) assembly. In contrast to DGAT2 it is not essential for survival. Functions as the major acyl-CoA retinol acyltransferase (ARAT) in the skin, where it acts to maintain retinoid homeostasis and prevent retinoid toxicity leading to skin and hair disorders. Exhibits additional acyltransferase activities, includin acyl CoA:monoacylglycerol acyltransferase (MGAT), wax monoester and wax diester synthases. Also able to use 1-monoalkylglycerol (1-MAkG) as an acyl acceptor for the synthesis of monoalkyl-monoacylglycerol (MAMAG). The chain is Diacylglycerol O-acyltransferase 1 from Rattus norvegicus (Rat).